The following is a 563-amino-acid chain: MRSRSLLLVALATLLLHASASASDDDLDYLIDNADDIPANDPDGWLQEGSPDDDDDDDLFHHGQAQDHPIDETHVFLLSAANFSDFLASHRHVMVEFYAPWCAHCQALAPDYAAAAADLSPLAHQVALAKVDATEDTDLAQKYDVQGFPTILFFIDGVPKDYNGARTKEAIVSWVNKKLAPGVQNITTVDEAEKILTGEDKAILAVLDSLSGAHSDEIAAASRLEDAINFYQTSNPDVAKLFHLDPAAKRPSLVLLKKQEEEKLTFYDGPFKASAIADFVSANKLPLVNTLTQETAPSIFDNPIKKQILLFVVANESSKFLPIFKEASKSFKGKLLFVFVERDNEEVGEPVANYFGITGQETTVLAYTGNEDARNFFLDGEISVENIKRFAEDFLEEKLTPFYKSEPVPESNEGDVKIVVGKNLDQIVLDESKDALLEIYAPWCGHCQELEPTYNKLGKHLRGIDSLVIAKMDGTANEHPRAKPDGFPTILFYPAGKKSFEPITFEGDRTVVEMYKFIKKHASIPFKLKRPDSSATKTEKDQSTASTNLRGERSSGTNFKDEL.

The N-terminal stretch at 1–22 (MRSRSLLLVALATLLLHASASA) is a signal peptide. The tract at residues 40 to 64 (NDPDGWLQEGSPDDDDDDDLFHHGQ) is disordered. Residues 46-180 (LQEGSPDDDD…IVSWVNKKLA (135 aa)) form the Thioredoxin 1 domain. A glycan (N-linked (GlcNAc...) asparagine) is linked at N82. Active-site nucleophile residues include C102 and C105. An intrachain disulfide couples C102 to C105. N185 and N315 each carry an N-linked (GlcNAc...) asparagine glycan. One can recognise a Thioredoxin 2 domain in the interval 394–523 (FLEEKLTPFY…MYKFIKKHAS (130 aa)). Residues C444 and C447 each act as nucleophile in the active site. Residues C444 and C447 are joined by a disulfide bond. Over residues 529–542 (KRPDSSATKTEKDQ) the composition is skewed to basic and acidic residues. The segment at 529 to 563 (KRPDSSATKTEKDQSTASTNLRGERSSGTNFKDEL) is disordered. A compositionally biased stretch (polar residues) spans 543–563 (STASTNLRGERSSGTNFKDEL). The short motif at 560 to 563 (KDEL) is the Prevents secretion from ER element.

Belongs to the protein disulfide isomerase family.

The protein localises to the endoplasmic reticulum lumen. It carries out the reaction Catalyzes the rearrangement of -S-S- bonds in proteins.. Functionally, acts as a protein-folding catalyst that interacts with nascent polypeptides to catalyze the formation, isomerization, and reduction or oxidation of disulfide bonds. May play a role in storage protein biogenesis. The protein is Protein disulfide isomerase-like 1-4 (PDIL1-4) of Oryza sativa subsp. japonica (Rice).